The chain runs to 157 residues: MNKAIPVLKLPVDFRLSLSIPQGDLYVSPDRGLVYGLRADAAVGDIVSKNHMVEMRITDAKTKRHTVDVGPGECDVLVVNPQGTISINSFTSSLIGGARSICVVGEEDLLVIPFTLVRGFKIIYGQPDVGVVISSPSRERVLKILKGLKPDIVIMNL.

The GTP site is built by D40, D59, K61, E107, and D128.

It belongs to the GTP-dependent DPCK family.

It catalyses the reaction 3'-dephospho-CoA + GTP = GDP + CoA + H(+). It functions in the pathway cofactor biosynthesis; coenzyme A biosynthesis. In terms of biological role, catalyzes the GTP-dependent phosphorylation of the 3'-hydroxyl group of dephosphocoenzyme A to form coenzyme A (CoA). The sequence is that of GTP-dependent dephospho-CoA kinase from Desulfurococcus amylolyticus (strain DSM 18924 / JCM 16383 / VKM B-2413 / 1221n) (Desulfurococcus kamchatkensis).